Reading from the N-terminus, the 171-residue chain is 3-hydroxydecanoyl-[acyl-carrier-protein] dehydratase (171 aa).

Histidine 70 is an active-site residue.

It belongs to the thioester dehydratase family. FabA subfamily. As to quaternary structure, homodimer.

It is found in the cytoplasm. It carries out the reaction a (3R)-hydroxyacyl-[ACP] = a (2E)-enoyl-[ACP] + H2O. The catalysed reaction is (3R)-hydroxydecanoyl-[ACP] = (2E)-decenoyl-[ACP] + H2O. It catalyses the reaction (2E)-decenoyl-[ACP] = (3Z)-decenoyl-[ACP]. It functions in the pathway lipid metabolism; fatty acid biosynthesis. In terms of biological role, necessary for the introduction of cis unsaturation into fatty acids. Catalyzes the dehydration of (3R)-3-hydroxydecanoyl-ACP to E-(2)-decenoyl-ACP and then its isomerization to Z-(3)-decenoyl-ACP. Can catalyze the dehydratase reaction for beta-hydroxyacyl-ACPs with saturated chain lengths up to 16:0, being most active on intermediate chain length. This is 3-hydroxydecanoyl-[acyl-carrier-protein] dehydratase from Pseudoalteromonas translucida (strain TAC 125).